The primary structure comprises 144 residues: Bacilliredoxin BCE_4227 (144 aa).

This sequence belongs to the bacilliredoxin family.

The polypeptide is Bacilliredoxin BCE_4227 (Bacillus cereus (strain ATCC 10987 / NRS 248)).